The following is a 330-amino-acid chain: DNA-directed RNA polymerase subunit alpha (330 aa).

Positions 1-231 (MQTNLLKPKA…EQLAVFAQLE (231 aa)) are alpha N-terminal domain (alpha-NTD). Positions 250–330 (FDPILLRPVD…NWPPAGLDKR (81 aa)) are alpha C-terminal domain (alpha-CTD).

This sequence belongs to the RNA polymerase alpha chain family. Homodimer. The RNAP catalytic core consists of 2 alpha, 1 beta, 1 beta' and 1 omega subunit. When a sigma factor is associated with the core the holoenzyme is formed, which can initiate transcription.

It carries out the reaction RNA(n) + a ribonucleoside 5'-triphosphate = RNA(n+1) + diphosphate. In terms of biological role, DNA-dependent RNA polymerase catalyzes the transcription of DNA into RNA using the four ribonucleoside triphosphates as substrates. The sequence is that of DNA-directed RNA polymerase subunit alpha from Acidovorax ebreus (strain TPSY) (Diaphorobacter sp. (strain TPSY)).